The primary structure comprises 169 residues: Cell division inhibitor SulA (169 aa).

Positions 1–22 (MHTSIYANRSTSFSPSAGNDTQ) are disordered. Residues 106 to 112 (ALRTGNY) form a ftsZ binding region. A lon protease binding region spans residues 162–169 (KIHSNLYH).

Belongs to the SulA family. In terms of assembly, interacts with FtsZ. In terms of processing, is rapidly cleaved and degraded by the Lon protease once DNA damage is repaired.

In terms of biological role, component of the SOS system and an inhibitor of cell division. Accumulation of SulA causes rapid cessation of cell division and the appearance of long, non-septate filaments. In the presence of GTP, binds a polymerization-competent form of FtsZ in a 1:1 ratio, thus inhibiting FtsZ polymerization and therefore preventing it from participating in the assembly of the Z ring. This mechanism prevents the premature segregation of damaged DNA to daughter cells during cell division. The chain is Cell division inhibitor SulA from Enterobacter sp. (strain 638).